A 477-amino-acid polypeptide reads, in one-letter code: tRNA-2-methylthio-N(6)-dimethylallyladenosine synthase (477 aa).

The 118-residue stretch at 3-120 (KKLFIKTWGC…LPEMINQIKG (118 aa)) folds into the MTTase N-terminal domain. The [4Fe-4S] cluster site is built by Cys-12, Cys-49, Cys-83, Cys-157, Cys-161, and Cys-164. In terms of domain architecture, Radical SAM core spans 143 to 375 (KAEGPTAFVS…QNRITQQALR (233 aa)). The TRAM domain maps to 378-441 (RNMIDSEQRV…ANSLRGDVLR (64 aa)).

The protein belongs to the methylthiotransferase family. MiaB subfamily. As to quaternary structure, monomer. The cofactor is [4Fe-4S] cluster.

Its subcellular location is the cytoplasm. It carries out the reaction N(6)-dimethylallyladenosine(37) in tRNA + (sulfur carrier)-SH + AH2 + 2 S-adenosyl-L-methionine = 2-methylsulfanyl-N(6)-dimethylallyladenosine(37) in tRNA + (sulfur carrier)-H + 5'-deoxyadenosine + L-methionine + A + S-adenosyl-L-homocysteine + 2 H(+). In terms of biological role, catalyzes the methylthiolation of N6-(dimethylallyl)adenosine (i(6)A), leading to the formation of 2-methylthio-N6-(dimethylallyl)adenosine (ms(2)i(6)A) at position 37 in tRNAs that read codons beginning with uridine. This chain is tRNA-2-methylthio-N(6)-dimethylallyladenosine synthase, found in Pseudoalteromonas atlantica (strain T6c / ATCC BAA-1087).